The sequence spans 293 residues: Digeranylgeranylglyceryl phosphate synthase (293 aa).

7 helical membrane-spanning segments follow: residues 26-46 (LMYG…FSDL), 50-70 (LLGY…NDYF), 107-127 (FVAA…VSVL), 140-160 (FAGN…GSII), 215-235 (IASL…FLLP), 237-257 (FLFD…LIYV), and 273-293 (YRKV…AGAF).

This sequence belongs to the UbiA prenyltransferase family. DGGGP synthase subfamily. Requires Mg(2+) as cofactor.

Its subcellular location is the cell membrane. It carries out the reaction sn-3-O-(geranylgeranyl)glycerol 1-phosphate + (2E,6E,10E)-geranylgeranyl diphosphate = 2,3-bis-O-(geranylgeranyl)-sn-glycerol 1-phosphate + diphosphate. It participates in membrane lipid metabolism; glycerophospholipid metabolism. Its function is as follows. Prenyltransferase that catalyzes the transfer of the geranylgeranyl moiety of geranylgeranyl diphosphate (GGPP) to the C2 hydroxyl of (S)-3-O-geranylgeranylglyceryl phosphate (GGGP). This reaction is the second ether-bond-formation step in the biosynthesis of archaeal membrane lipids. This Archaeoglobus fulgidus (strain ATCC 49558 / DSM 4304 / JCM 9628 / NBRC 100126 / VC-16) protein is Digeranylgeranylglyceryl phosphate synthase.